Reading from the N-terminus, the 190-residue chain is Imidazoleglycerol-phosphate dehydratase (190 aa).

The protein belongs to the imidazoleglycerol-phosphate dehydratase family.

It localises to the cytoplasm. It carries out the reaction D-erythro-1-(imidazol-4-yl)glycerol 3-phosphate = 3-(imidazol-4-yl)-2-oxopropyl phosphate + H2O. The protein operates within amino-acid biosynthesis; L-histidine biosynthesis; L-histidine from 5-phospho-alpha-D-ribose 1-diphosphate: step 6/9. This chain is Imidazoleglycerol-phosphate dehydratase, found in Methanococcus maripaludis (strain C7 / ATCC BAA-1331).